The chain runs to 101 residues: Trp operon repressor homolog (101 aa).

The DNA-binding element occupies 59–82; that stretch reads QREIQQNLNTSAATITRGSNMIKT.

This sequence belongs to the TrpR family. As to quaternary structure, homodimer.

The protein resides in the cytoplasm. In terms of biological role, this protein is an aporepressor. When complexed with L-tryptophan it binds the operator region of the trp operon and prevents the initiation of transcription. The protein is Trp operon repressor homolog of Haemophilus influenzae (strain 86-028NP).